The primary structure comprises 419 residues: Elongation factor Tu, chloroplastic (419 aa).

Residues Lys10–Lys214 form the tr-type G domain. Residues Gly19–Thr26 form a G1 region. Residue Gly19–Thr26 coordinates GTP. Residue Thr26 participates in Mg(2+) binding. Residues Gly60–Asn64 are G2. A G3 region spans residues Asp81–Gly84. GTP is bound by residues Asp81 to His85 and Asn136 to Asp139. The segment at Asn136–Asp139 is G4. The segment at Ser174 to Leu176 is G5.

It belongs to the TRAFAC class translation factor GTPase superfamily. Classic translation factor GTPase family. EF-Tu/EF-1A subfamily.

The protein localises to the plastid. The protein resides in the chloroplast. The catalysed reaction is GTP + H2O = GDP + phosphate + H(+). Its function is as follows. GTP hydrolase that promotes the GTP-dependent binding of aminoacyl-tRNA to the A-site of ribosomes during protein biosynthesis. This is Elongation factor Tu, chloroplastic (tufA) from Chara vulgaris (Common stonewort).